Consider the following 432-residue polypeptide: Enolase 1 (432 aa).

Gln-163 provides a ligand contact to (2R)-2-phosphoglycerate. Catalysis depends on Glu-205, which acts as the Proton donor. Mg(2+) is bound by residues Asp-242, Glu-287, and Asp-314. The (2R)-2-phosphoglycerate site is built by Lys-339, Arg-368, Ser-369, and Lys-390. Residue Lys-339 is the Proton acceptor of the active site.

Belongs to the enolase family. The cofactor is Mg(2+).

It is found in the cytoplasm. It localises to the secreted. The protein resides in the cell surface. The catalysed reaction is (2R)-2-phosphoglycerate = phosphoenolpyruvate + H2O. Its pathway is carbohydrate degradation; glycolysis; pyruvate from D-glyceraldehyde 3-phosphate: step 4/5. Functionally, catalyzes the reversible conversion of 2-phosphoglycerate (2-PG) into phosphoenolpyruvate (PEP). It is essential for the degradation of carbohydrates via glycolysis. The polypeptide is Enolase 1 (Lactobacillus johnsonii (strain CNCM I-12250 / La1 / NCC 533)).